We begin with the raw amino-acid sequence, 252 residues long: Imidazole glycerol phosphate synthase subunit HisF (252 aa).

Residues D11 and D130 contribute to the active site.

Belongs to the HisA/HisF family. As to quaternary structure, heterodimer of HisH and HisF.

It localises to the cytoplasm. It carries out the reaction 5-[(5-phospho-1-deoxy-D-ribulos-1-ylimino)methylamino]-1-(5-phospho-beta-D-ribosyl)imidazole-4-carboxamide + L-glutamine = D-erythro-1-(imidazol-4-yl)glycerol 3-phosphate + 5-amino-1-(5-phospho-beta-D-ribosyl)imidazole-4-carboxamide + L-glutamate + H(+). It functions in the pathway amino-acid biosynthesis; L-histidine biosynthesis; L-histidine from 5-phospho-alpha-D-ribose 1-diphosphate: step 5/9. IGPS catalyzes the conversion of PRFAR and glutamine to IGP, AICAR and glutamate. The HisF subunit catalyzes the cyclization activity that produces IGP and AICAR from PRFAR using the ammonia provided by the HisH subunit. The protein is Imidazole glycerol phosphate synthase subunit HisF of Staphylococcus saprophyticus subsp. saprophyticus (strain ATCC 15305 / DSM 20229 / NCIMB 8711 / NCTC 7292 / S-41).